The following is a 434-amino-acid chain: Adenylosuccinate synthetase (434 aa).

Residues 22 to 28 (GDEGKGK) and 50 to 52 (GHT) each bind GTP. Aspartate 23 serves as the catalytic Proton acceptor. Mg(2+)-binding residues include aspartate 23 and glycine 50. IMP contacts are provided by residues 23-26 (DEGK), 48-51 (NAGH), threonine 139, arginine 153, glutamine 234, threonine 249, and arginine 313. Histidine 51 acts as the Proton donor in catalysis. Position 309-315 (309-315 (ATTGRKR)) interacts with substrate. Residues arginine 315, 341–343 (KLD), and 423–425 (SVG) each bind GTP.

It belongs to the adenylosuccinate synthetase family. In terms of assembly, homodimer. Mg(2+) serves as cofactor.

The protein localises to the cytoplasm. The enzyme catalyses IMP + L-aspartate + GTP = N(6)-(1,2-dicarboxyethyl)-AMP + GDP + phosphate + 2 H(+). It participates in purine metabolism; AMP biosynthesis via de novo pathway; AMP from IMP: step 1/2. Functionally, plays an important role in the de novo pathway of purine nucleotide biosynthesis. Catalyzes the first committed step in the biosynthesis of AMP from IMP. The chain is Adenylosuccinate synthetase from Chlorobium luteolum (strain DSM 273 / BCRC 81028 / 2530) (Pelodictyon luteolum).